Here is a 186-residue protein sequence, read N- to C-terminus: uncharacterized protein (186 aa).

An N-terminal signal peptide occupies residues 1-21; that stretch reads MKFFLGSALFLILTFINLVRA. Topologically, residues 22–142 are extracellular; it reads EFEFITPAED…AFSVNPIDKK (121 aa). N-linked (GlcNAc...) asparagine glycosylation is found at Asn62, Asn75, Asn93, and Asn104. A helical membrane pass occupies residues 143-163; it reads LAIGLSVGLSCCILIVLFLHF. The Cytoplasmic segment spans residues 164–186; the sequence is ATRRERRILKNEKELEMSSYRKH.

Its subcellular location is the membrane. This is an uncharacterized protein from Schizosaccharomyces pombe (strain 972 / ATCC 24843) (Fission yeast).